The sequence spans 214 residues: Adenylate kinase (214 aa).

Residue 10–15 (GAGKGT) coordinates ATP. The segment at 30-59 (STGDMLRAAVKAGSELGKQAKAIMDAGKLV) is NMP. Residues T31, R36, 57–59 (KLV), 85–88 (GFPR), and Q92 each bind AMP. The segment at 122–159 (GRRVHPGSGRVYHVKFNPPQVEGKDDVTGEDLMTRKDD) is LID. ATP is bound by residues R123 and 132–133 (VY). R156 and R167 together coordinate AMP. Q200 lines the ATP pocket.

The protein belongs to the adenylate kinase family. Monomer.

The protein localises to the cytoplasm. The enzyme catalyses AMP + ATP = 2 ADP. Its pathway is purine metabolism; AMP biosynthesis via salvage pathway; AMP from ADP: step 1/1. Catalyzes the reversible transfer of the terminal phosphate group between ATP and AMP. Plays an important role in cellular energy homeostasis and in adenine nucleotide metabolism. In Edwardsiella ictaluri (strain 93-146), this protein is Adenylate kinase.